The sequence spans 188 residues: MPLDKVLQEIQQKGEEEVRRIREETEKEVEKILAEAKAEAEEILKKAREEAEKEAEAIRRQEISSVKLEMKRELLNVQKEILEEVFNLLRQKVRDMDEETRKKILKNLLEKNASPGMVVYSRKEDEDIVKELIKELKLDVTYGGNIDCIGGVILEDPAGDIRLNLTFDELVSQVYEQKLSEVSKLLFK.

This sequence belongs to the V-ATPase E subunit family. Has multiple subunits with at least A(3), B(3), C, D, E, F, H, I and proteolipid K(x).

The protein resides in the cell membrane. Its function is as follows. Component of the A-type ATP synthase that produces ATP from ADP in the presence of a proton gradient across the membrane. The protein is A-type ATP synthase subunit E of Archaeoglobus fulgidus (strain ATCC 49558 / DSM 4304 / JCM 9628 / NBRC 100126 / VC-16).